The chain runs to 413 residues: Hemocyanin type 2 unit e (413 aa).

N-linked (GlcNAc...) (high mannose) asparagine glycosylation is present at Asn-17. His-49 contributes to the Cu cation binding site. Cys-55 and Cys-66 are disulfide-bonded. Positions 67–69 (CVH) form a cross-link, 2'-(S-cysteinyl)-histidine (Cys-His). His-69 and His-78 together coordinate Cu cation. Asn-127 carries an N-linked (GlcNAc...) (high mannose) asparagine glycan. 2 disulfide bridges follow: Cys-179-Cys-246 and Cys-336-Cys-342. Cu cation is bound by residues His-189, His-193, and His-220.

It belongs to the tyrosinase family. Hemocyanin subfamily. Decamers of large identical subunits, each containing 8 globular oxygen-binding functional units. Cu(2+) serves as cofactor. Hemolymph.

It localises to the secreted. It is found in the extracellular space. Hemocyanins are copper-containing oxygen carriers occurring freely dissolved in the hemolymph of many mollusks and arthropods. The chain is Hemocyanin type 2 unit e from Rapana venosa (Veined rapa whelk).